Consider the following 622-residue polypeptide: Procollagen galactosyltransferase 1 (622 aa).

A signal peptide spans 1–29 (MAAAPRAGRRRGQPLLALLLLLLAPLPPG). 3 N-linked (GlcNAc...) asparagine glycosylation sites follow: Asn-96, Asn-184, and Asn-381. Positions 588–606 (RAKSQKMREQQALSREAKN) are enriched in basic and acidic residues. A disordered region spans residues 588 to 622 (RAKSQKMREQQALSREAKNSDVLQSPLDSAARDEL). The short motif at 619–622 (RDEL) is the Endoplasmic reticulum retention motif element.

Belongs to the glycosyltransferase 25 family. Post-translationally, N-glycosylated. In terms of tissue distribution, ubiquitous with higher levels in placenta, heart, lung and spleen.

The protein localises to the endoplasmic reticulum lumen. The catalysed reaction is (5R)-5-hydroxy-L-lysyl-[collagen] + UDP-alpha-D-galactose = (5R)-5-O-(beta-D-galactosyl)-5-hydroxy-L-lysyl-[collagen] + UDP + H(+). Beta-galactosyltransferase that transfers beta-galactose to hydroxylysine residues of type I collagen. By acting on collagen glycosylation, facilitates the formation of collagen triple helix. Also involved in the biosynthesis of collagen type IV. This is Procollagen galactosyltransferase 1 (COLGALT1) from Homo sapiens (Human).